A 258-amino-acid polypeptide reads, in one-letter code: Probable succinate transporter subunit YjjP (258 aa).

5 helical membrane passes run 116-137 (YPRW…KLNN), 143-160 (AVVT…RQLL), 171-191 (FCIT…LPAF), 197-217 (IAMA…NAVA), and 231-251 (WAIA…AMTM).

It belongs to the ThrE exporter (TC 2.A.79) family. In terms of assembly, the transporter is composed of YjjB and YjjP.

It is found in the cell inner membrane. Involved in succinate export with YjjB. Both proteins are required for export. Participates in succinate export, but also in the export of other dicarboxylates, such as fumarate and malate. Contributes to succinate production under both aerobic and anaerobic conditions, and increases fumarate and malate production during anaerobic succinate production. This is Probable succinate transporter subunit YjjP from Klebsiella aerogenes (strain ATCC 13048 / DSM 30053 / CCUG 1429 / JCM 1235 / KCTC 2190 / NBRC 13534 / NCIMB 10102 / NCTC 10006 / CDC 819-56) (Enterobacter aerogenes).